We begin with the raw amino-acid sequence, 141 residues long: Large ribosomal subunit protein uL14 (141 aa).

It belongs to the universal ribosomal protein uL14 family. Part of the 50S ribosomal subunit. Forms a cluster with proteins L3 and L24e, part of which may contact the 16S rRNA in 2 intersubunit bridges.

Its function is as follows. Binds to 23S rRNA. Forms part of two intersubunit bridges in the 70S ribosome. This Pyrococcus furiosus (strain ATCC 43587 / DSM 3638 / JCM 8422 / Vc1) protein is Large ribosomal subunit protein uL14.